A 360-amino-acid chain; its full sequence is Alpha-N-acetyl-neuraminyl-2,3-beta-galactosyl-1,3-N-acetyl-galactosaminide alpha-2,6-sialyltransferase (360 aa).

Residues 1–71 are Cytoplasmic-facing; the sequence is MEHVVTCWRL…PGRLLLLTLC (71 aa). Residues 72–94 form a helical; Signal-anchor for type II membrane protein membrane-spanning segment; it reads ILTFSAVCVFLCCWACLPLCLAT. Topologically, residues 95–360 are lumenal; the sequence is CLDRHLPAAP…VFAHPSWRAK (266 aa). A disulfide bridge links C134 with C283. Residue N193 is glycosylated (N-linked (GlcNAc...) asparagine).

This sequence belongs to the glycosyltransferase 29 family. As to expression, high expression in brain and colon and to a lesser extent in lung, heart, kidney, spleen and thymus.

Its subcellular location is the golgi apparatus membrane. The enzyme catalyses an alpha-Neu5Ac-(2-&gt;3)-beta-D-Gal-(1-&gt;3)-D-GlcNAc derivative + CMP-N-acetyl-beta-neuraminate = an alpha-Neu5Ac-(2-&gt;3)-beta-D-Gal-(1-&gt;3)-[alpha-Neu5Ac-(2-&gt;6)]-D-GlcNAc derivative + CMP + H(+). The catalysed reaction is N-acetyl-alpha-neuraminosyl-(2-&gt;3)-beta-D-galactosyl-(1-&gt;3)-N-acetyl-D-galactosamine + CMP-N-acetyl-beta-neuraminate = N-acetyl-alpha-neuraminosyl-(2-&gt;3)-beta-D-galactosyl-(1-&gt;3)-[N-acetyl-alpha-neuraminosyl-(2-&gt;6)]-N-acetyl-D-galactosamine + CMP + H(+). It catalyses the reaction a ganglioside GM1b (d18:1(4E)) + CMP-N-acetyl-beta-neuraminate = a ganglioside GD1alpha (d18:1(4E)) + CMP + H(+). It carries out the reaction 3-O-[alpha-Neu5Ac-(2-&gt;3)-beta-D-Gal-(1-&gt;3)-alpha-D-GalNAc]-L-Ser-[protein] + CMP-N-acetyl-beta-neuraminate = a 3-O-{alpha-Neu5Ac-(2-&gt;3)-beta-D-Gal-(1-&gt;3)-[alpha-Neu5Ac-(2-&gt;6)]-alpha-D-GalNAc}-L-seryl-[protein] + CMP + H(+). The enzyme catalyses 3-O-[alpha-Neu5Ac-(2-&gt;3)-beta-D-Gal-(1-&gt;3)-alpha-D-GalNAc]-L-Thr-[protein] + CMP-N-acetyl-beta-neuraminate = a 3-O-{alpha-Neu5Ac-(2-&gt;3)-beta-D-Gal-(1-&gt;3)-[alpha-Neu5Ac-(2-&gt;6)]-alpha-D-GalNAc}-L-threonyl-[protein] + CMP + H(+). The protein operates within protein modification; protein glycosylation. It functions in the pathway glycolipid biosynthesis. Transfers the sialyl group (N-acetyl-alpha-neuraminyl or NeuAc) from CMP-NeuAc to the GalNAc residue on the NeuAc-alpha-2,3-Gal-beta-1,3-GalNAc sequence of glycoproteins and glycolipids forming an alpha-2,6-linkage. Produces branched type disialyl structures by transfer of a sialyl group onto a GalNAc residue inside the backbone core chains. Prefers O-glycans to glycoproteins or glycolipids. The protein is Alpha-N-acetyl-neuraminyl-2,3-beta-galactosyl-1,3-N-acetyl-galactosaminide alpha-2,6-sialyltransferase (St6galnac4) of Mus musculus (Mouse).